The chain runs to 341 residues: L-threonine 3-dehydrogenase (341 aa).

Cys-38 lines the Zn(2+) pocket. Active-site charge relay system residues include Thr-40 and His-43. Residues His-63, Glu-64, Cys-93, Cys-96, Cys-99, and Cys-107 each coordinate Zn(2+). NAD(+)-binding positions include Ile-175, Asp-195, Arg-200, 262-264 (LGI), and 286-287 (IY).

It belongs to the zinc-containing alcohol dehydrogenase family. Homotetramer. It depends on Zn(2+) as a cofactor.

It localises to the cytoplasm. The enzyme catalyses L-threonine + NAD(+) = (2S)-2-amino-3-oxobutanoate + NADH + H(+). It functions in the pathway amino-acid degradation; L-threonine degradation via oxydo-reductase pathway; glycine from L-threonine: step 1/2. Its function is as follows. Catalyzes the NAD(+)-dependent oxidation of L-threonine to 2-amino-3-ketobutyrate. The polypeptide is L-threonine 3-dehydrogenase (Shewanella halifaxensis (strain HAW-EB4)).